The primary structure comprises 531 residues: Doublesex- and mab-3-related transcription factor A2 (531 aa).

Positions 69–116 (CARCRNHGVVSALKGHKRYCRWKDCLCAKCTLIAERQRVMAAQVALRR) form a DNA-binding region, DM. A disordered region spans residues 197-312 (LQAGRPDSPQ…GGPGPRQRTP (116 aa)). Positions 274-285 (PGSSSPLGSESG) are enriched in low complexity. Residues 310-345 (RTPLDILTRVFPGHRRGVLELVLQGCGGDVVQAIEQ) form the DMA domain.

This sequence belongs to the DMRT family. As to expression, expressed in adult brain and testis, as well as in embryonic ovary, kidney, heart, lung, stomach and brain.

The protein localises to the nucleus. May be involved in sexual development. In Mus musculus (Mouse), this protein is Doublesex- and mab-3-related transcription factor A2 (Dmrta2).